The chain runs to 846 residues: MSSSHFASRHRKDISTEMIRTKIAHRKSLSQKENRHKEYERNRHFGLKDVNIPTLEGRILVELDETSQGLVPEKTNVKPRAMKTILGDQRKQMLQKYKEEKQLQKLKEQREKAKRGIFKVGRYRPDMPCFLLSNQNAVKAEPKKAIPSSVRITRSKAKDQMEQTKIDNESDVRAIRPGPRQTSEKKVSDKEKKVVQPVMPTSLRMTRSATQAAKQVPRTVSSTTARKPVTRAANENEPEGKVPSKGRPAKNVETKPDKGISCKVDSEENTLNSQTNATSGMNPDGVLSKMENLPEINTAKIKGKNSFAPKDFMFQPLDGLKTYQVTPMTPRSANAFLTPSYTWTPLKTEVDESQATKEILAQKCKTYSTKTIQQDSNKLPCPLGPLTVWHEEHVLNKNEATTKNLNGLPIKEVPSLERNEGRIAQPHHGVPYFRNILQSETEKLTSHCFEWDRKLELDIPDDAKDLIRTAVGQTRLLMKERFKQFEGLVDDCEYKRGIKETTCTDLDGFWDMVSFQIEDVIHKFNNLIKLEESGWQVNNNMNHNMNKNVFRKKVVSGIASKPKQDDAGRIAARNRLAAIKNAMRERIRQEECAETAVSVIPKEVDKIVFDAGFFRVESPVKLFSGLSVSSEGPSQRLGTPKSVNKAVSQSRNEMGIPQQTTSPENAGPQNTKSEHVKKTLFLSIPESRSSIEDAQCPGLPDLIEENHVVNKTDLKVDCLSSERMSLPLLAGGVADDINTNKKEGISDVVEGMELNSSITSQDVLMSSPEKNTASQNSILEEGETKISQSELFDNKSLTTECHLLDSPGLNCSNPFTQLERRHQEHARHISFGGNLITFSPLQPGEF.

A Phosphoserine; by CDK1 modification is found at serine 67. The stretch at 90–120 (RKQMLQKYKEEKQLQKLKEQREKAKRGIFKV) forms a coiled coil. The interval 153 to 284 (TRSKAKDQME…TNATSGMNPD (132 aa)) is disordered. Composition is skewed to basic and acidic residues over residues 156 to 174 (KAKD…DVRA) and 182 to 194 (TSEK…EKKV). Position 202 is a phosphoserine (serine 202). Residues 203–225 (LRMTRSATQAAKQVPRTVSSTTA) show a composition bias toward polar residues. Over residues 250-266 (KNVETKPDKGISCKVDS) the composition is skewed to basic and acidic residues. Over residues 269-281 (NTLNSQTNATSGM) the composition is skewed to polar residues. Threonine 326 carries the post-translational modification Phosphothreonine. Threonine 329 is subject to Phosphothreonine; by CDK1. Threonine 338 is modified (phosphothreonine). Lysine 347 is covalently cross-linked (Glycyl lysine isopeptide (Lys-Gly) (interchain with G-Cter in SUMO2)). Phosphothreonine; by CDK1 is present on residues threonine 401 and threonine 402. At serine 618 the chain carries Phosphoserine; by CDK1. Serine 627 bears the Phosphoserine; by AURKA mark. Residues 628-671 (VSSEGPSQRLGTPKSVNKAVSQSRNEMGIPQQTTSPENAGPQNT) are compositionally biased toward polar residues. The interval 628–674 (VSSEGPSQRLGTPKSVNKAVSQSRNEMGIPQQTTSPENAGPQNTKSE) is disordered. 2 positions are modified to phosphoserine: serine 629 and serine 634. Phosphothreonine; by CDK1 is present on threonine 639. Phosphoserine; by CDK1 is present on serine 642. Serine 662 carries the post-translational modification Phosphoserine. A phosphoserine; by AURKA mark is found at serine 725 and serine 757. Residue threonine 759 is modified to Phosphothreonine; by CDK1. Phosphoserine occurs at positions 774 and 777. Threonine 784 is subject to Phosphothreonine. 2 positions are modified to phosphoserine: serine 806 and serine 812. Serine 830 carries the post-translational modification Phosphoserine; by AURKA. A Phosphoserine; by CDK1 modification is found at serine 839.

Belongs to the SAPAP family. In terms of assembly, interacts with CDK1. Interacts with the C-terminal proline-rich region of FBXO7. Recruited by FBXO7 to a SCF (SKP1-CUL1-F-box) protein complex in a CDK1/Cyclin B-phosphorylation dependent manner. Interacts with CDH1. In terms of processing, ubiquitinated, leading to its degradation. Decreased phosphorylation levels are associated with the differentiation of intestinal epithelial cells. Abundantly expressed in fetal liver. Expressed at lower levels in bone marrow, testis, colon, and placenta.

The protein localises to the nucleus. The protein resides in the cytoplasm. It is found in the cytoskeleton. It localises to the spindle. Potential cell cycle regulator that may play a role in carcinogenesis of cancer cells. Mitotic phosphoprotein regulated by the ubiquitin-proteasome pathway. Key regulator of adherens junction integrity and differentiation that may be involved in CDH1-mediated adhesion and signaling in epithelial cells. The chain is Disks large-associated protein 5 (DLGAP5) from Homo sapiens (Human).